We begin with the raw amino-acid sequence, 522 residues long: 2-isopropylmalate synthase (522 aa).

Residues Val-5–His-267 form the Pyruvate carboxyltransferase domain. The Mn(2+) site is built by Asp-14, His-202, His-204, and Asn-238. Positions Gln-392–Val-522 are regulatory domain.

It belongs to the alpha-IPM synthase/homocitrate synthase family. LeuA type 1 subfamily. As to quaternary structure, homodimer. Mn(2+) is required as a cofactor.

It is found in the cytoplasm. The enzyme catalyses 3-methyl-2-oxobutanoate + acetyl-CoA + H2O = (2S)-2-isopropylmalate + CoA + H(+). It functions in the pathway amino-acid biosynthesis; L-leucine biosynthesis; L-leucine from 3-methyl-2-oxobutanoate: step 1/4. Its function is as follows. Catalyzes the condensation of the acetyl group of acetyl-CoA with 3-methyl-2-oxobutanoate (2-ketoisovalerate) to form 3-carboxy-3-hydroxy-4-methylpentanoate (2-isopropylmalate). The protein is 2-isopropylmalate synthase of Shewanella putrefaciens (strain CN-32 / ATCC BAA-453).